Here is a 102-residue protein sequence, read N- to C-terminus: Large ribosomal subunit protein uL24 (102 aa).

This sequence belongs to the universal ribosomal protein uL24 family. In terms of assembly, part of the 50S ribosomal subunit.

Its function is as follows. One of two assembly initiator proteins, it binds directly to the 5'-end of the 23S rRNA, where it nucleates assembly of the 50S subunit. In terms of biological role, one of the proteins that surrounds the polypeptide exit tunnel on the outside of the subunit. The chain is Large ribosomal subunit protein uL24 from Agrobacterium fabrum (strain C58 / ATCC 33970) (Agrobacterium tumefaciens (strain C58)).